A 181-amino-acid chain; its full sequence is Protein Syd (181 aa).

The protein belongs to the Syd family.

Its subcellular location is the cell inner membrane. Interacts with the SecY protein in vivo. May bind preferentially to an uncomplexed state of SecY, thus functioning either as a chelating agent for excess SecY in the cell or as a regulatory factor that negatively controls the translocase function. The chain is Protein Syd from Citrobacter koseri (strain ATCC BAA-895 / CDC 4225-83 / SGSC4696).